The following is a 553-amino-acid chain: Coiled-coil domain-containing protein 22 homolog (553 aa).

The tract at residues 236 to 264 (DSEEPAPPPISTVKPDASAEEEASPIQEL) is disordered. Coiled coils occupy residues 261–286 (IQEL…KAHA), 314–407 (ERTS…QSLA), and 498–549 (NVTK…VEQP).

The protein belongs to the CCDC22 family.

The polypeptide is Coiled-coil domain-containing protein 22 homolog (Drosophila erecta (Fruit fly)).